Consider the following 241-residue polypeptide: Eukaryotic translation initiation factor 3 subunit J (241 aa).

Basic and acidic residues predominate over residues 1–27 (MEEDWEQHGEKEEVPLPAKKPDANKWD). Residues 1-99 (MEEDWEQHGE…ENMTPEQKLA (99 aa)) are disordered. Residues 28-45 (GEDEEEEVKDSWEDEDEL) show a composition bias toward acidic residues. Residues 31–119 (EEEEVKDSWE…ESDLKNALDT (89 aa)) are a coiled coil. Basic and acidic residues-rich tracts occupy residues 46-58 (EEKK…ETPK) and 69-90 (IVEK…KEAE).

The protein belongs to the eIF-3 subunit J family. As to quaternary structure, component of the eukaryotic translation initiation factor 3 (eIF-3) complex.

It localises to the cytoplasm. In terms of biological role, component of the eukaryotic translation initiation factor 3 (eIF-3) complex, which is involved in protein synthesis of a specialized repertoire of mRNAs and, together with other initiation factors, stimulates binding of mRNA and methionyl-tRNAi to the 40S ribosome. The eIF-3 complex specifically targets and initiates translation of a subset of mRNAs involved in cell proliferation. The polypeptide is Eukaryotic translation initiation factor 3 subunit J (Culex quinquefasciatus (Southern house mosquito)).